The primary structure comprises 204 residues: Small ribosomal subunit protein uS4 (204 aa).

The S4 RNA-binding domain occupies 93–156 (SRLSSVLYHS…AKIPILIEAE (64 aa)).

Belongs to the universal ribosomal protein uS4 family. In terms of assembly, part of the 30S ribosomal subunit. Contacts protein S5. The interaction surface between S4 and S5 is involved in control of translational fidelity.

Functionally, one of the primary rRNA binding proteins, it binds directly to 16S rRNA where it nucleates assembly of the body of the 30S subunit. With S5 and S12 plays an important role in translational accuracy. In Wolbachia pipientis subsp. Culex pipiens (strain wPip), this protein is Small ribosomal subunit protein uS4.